The primary structure comprises 249 residues: Type-1Aa cytolytic delta-endotoxin (249 aa).

Belongs to the cyt1/cyt2 endotoxin family. In terms of processing, active after proteolytic processing.

Kills the larvae of dipteran insects by making pores in the epithelial cell membrane of the insect midgut. Acts on mosquitos and black flies. The protein is Type-1Aa cytolytic delta-endotoxin (cyt1Aa) of Bacillus thuringiensis subsp. morrisoni.